We begin with the raw amino-acid sequence, 163 residues long: Nucleotide-binding protein EAT1b_2037 (163 aa).

The protein belongs to the YajQ family.

Its function is as follows. Nucleotide-binding protein. The polypeptide is Nucleotide-binding protein EAT1b_2037 (Exiguobacterium sp. (strain ATCC BAA-1283 / AT1b)).